The primary structure comprises 66 residues: Large ribosomal subunit protein bL35 (66 aa).

This sequence belongs to the bacterial ribosomal protein bL35 family.

The polypeptide is Large ribosomal subunit protein bL35 (Synechococcus sp. (strain ATCC 27144 / PCC 6301 / SAUG 1402/1) (Anacystis nidulans)).